A 156-amino-acid chain; its full sequence is Protein-export protein SecB (156 aa).

The protein belongs to the SecB family. Homotetramer, a dimer of dimers. One homotetramer interacts with 1 SecA dimer.

It is found in the cytoplasm. In terms of biological role, one of the proteins required for the normal export of preproteins out of the cell cytoplasm. It is a molecular chaperone that binds to a subset of precursor proteins, maintaining them in a translocation-competent state. It also specifically binds to its receptor SecA. The protein is Protein-export protein SecB of Xanthobacter autotrophicus (strain ATCC BAA-1158 / Py2).